The chain runs to 61 residues: Photosystem II reaction center protein K (61 aa).

Residues 1–24 (MLNIFNLVCICIHSVLYSSSFFSA) constitute a propeptide that is removed on maturation. Residues 36–56 (IVDIMPVIPLLFFLLAFVWQA) traverse the membrane as a helical segment.

This sequence belongs to the PsbK family. As to quaternary structure, PSII is composed of 1 copy each of membrane proteins PsbA, PsbB, PsbC, PsbD, PsbE, PsbF, PsbH, PsbI, PsbJ, PsbK, PsbL, PsbM, PsbT, PsbX, PsbY, PsbZ, Psb30/Ycf12, at least 3 peripheral proteins of the oxygen-evolving complex and a large number of cofactors. It forms dimeric complexes.

It is found in the plastid. It localises to the chloroplast thylakoid membrane. Its function is as follows. One of the components of the core complex of photosystem II (PSII). PSII is a light-driven water:plastoquinone oxidoreductase that uses light energy to abstract electrons from H(2)O, generating O(2) and a proton gradient subsequently used for ATP formation. It consists of a core antenna complex that captures photons, and an electron transfer chain that converts photonic excitation into a charge separation. This chain is Photosystem II reaction center protein K, found in Glycine max (Soybean).